Consider the following 134-residue polypeptide: Acyl carrier protein, chloroplastic (134 aa).

Residues 1–51 (MATTFSASVSTLATSLATPTRISFQKPALVSRTNLSFNLRRSIPTRLSVSC) constitute a chloroplast transit peptide. In terms of domain architecture, Carrier spans 55-130 (PETIEKVSKI…EAAELIEELV (76 aa)). Serine 90 is modified (O-(pantetheine 4'-phosphoryl)serine).

Belongs to the acyl carrier protein (ACP) family. 4'-phosphopantetheine is transferred from CoA to a specific serine of apo-ACP by acpS. This modification is essential for activity because fatty acids are bound in thioester linkage to the sulfhydryl of the prosthetic group. In terms of tissue distribution, seed.

It is found in the plastid. The protein resides in the chloroplast. It functions in the pathway lipid metabolism; fatty acid biosynthesis. In terms of biological role, carrier of the growing fatty acid chain in fatty acid biosynthesis. The polypeptide is Acyl carrier protein, chloroplastic (ACL1.A3) (Brassica napus (Rape)).